The primary structure comprises 353 residues: uncharacterized protein (353 aa).

The N-terminal stretch at 1 to 28 is a signal peptide; it reads MHLTIMRRFAVLLLLAIFLGGCSGSNGA.

This is an uncharacterized protein from Archaeoglobus fulgidus (strain ATCC 49558 / DSM 4304 / JCM 9628 / NBRC 100126 / VC-16).